The chain runs to 175 residues: Ribulose bisphosphate carboxylase small subunit, chloroplastic 2 (175 aa).

A chloroplast-targeting transit peptide spans 1–46 (MAPTVMASSATSVAPFQGLKSTAGLPVSRRSTNSGFGNVSNGGRIK).

The protein belongs to the RuBisCO small chain family. As to quaternary structure, heterohexadecamer of 8 large and 8 small subunits.

It is found in the plastid. It localises to the chloroplast. Functionally, ruBisCO catalyzes two reactions: the carboxylation of D-ribulose 1,5-bisphosphate, the primary event in carbon dioxide fixation, as well as the oxidative fragmentation of the pentose substrate. Both reactions occur simultaneously and in competition at the same active site. Although the small subunit is not catalytic it is essential for maximal activity. The polypeptide is Ribulose bisphosphate carboxylase small subunit, chloroplastic 2 (Oryza sativa subsp. japonica (Rice)).